The primary structure comprises 23 residues: Magainin-R1 (23 aa).

As to expression, expressed by the skin glands.

Its subcellular location is the secreted. In terms of biological role, antimicrobial peptide. This chain is Magainin-R1, found in Xenopus ruwenzoriensis (Uganda clawed frog).